Reading from the N-terminus, the 168-residue chain is Lipid transfer protein EARLI 1 (168 aa).

The N-terminal stretch at 1–25 (MASKNSASIALFFALNIIFFTLTAA) is a signal peptide. Positions 32 to 81 (PSPKHKPVPSPKPKPVPSPKPKPVPSPSVPSPSVPSPNPRPVTPPRTPGS) are disordered. The A-1 repeat unit spans residues 34 to 41 (PKHKPVPS). The 3 X 8 AA repeats A of P-K-[HP]-K-P-V-P-S stretch occupies residues 34-57 (PKHKPVPSPKPKPVPSPKPKPVPS). The segment covering 39 to 78 (VPSPKPKPVPSPKPKPVPSPSVPSPSVPSPNPRPVTPPRT) has biased composition (pro residues). One copy of the A-2 repeat lies at 42 to 49 (PKPKPVPS). The stretch at 50-57 (PKPKPVPS) is one A-3 repeat. The stretch at 58-62 (PSVPS) is one B-1 repeat. Residues 58-67 (PSVPSPSVPS) are 2 X 58 AA tandem repeats B of P-S-V-P-S. The stretch at 63 to 67 (PSVPS) is one B-2 repeat.

This sequence belongs to the plant LTP family. PEARLI1 subfamily. Mostly expressed in aerial part of seedlings, and, to a lower extent, in roots. Higher basal levels in early-flowering ecotypes.

It localises to the secreted. It is found in the cell wall. Functionally, probable lipid transfer protein (LTP). May improve freezing survival. Seems to control the flowering process and lignin synthesis. Has an auxiliary role for germinability and early seedling development under low temperature and salt stress conditions, probably in an abscisic acid- (ABA) dependent manner. Confers resistance to Botrytis cinerea and exhibits anti-fungal activity, at least against S.cerevisiae, B.cinerea and Fusarium oxysporum, probably by increasing their membrane permeability. The chain is Lipid transfer protein EARLI 1 (EARLI1) from Arabidopsis thaliana (Mouse-ear cress).